Reading from the N-terminus, the 1172-residue chain is Short transient receptor potential channel 2 (1172 aa).

The segment covering Met-1–Ser-10 has biased composition (basic and acidic residues). Disordered regions lie at residues Met-1–Asp-22, Val-69–Asn-98, Ser-140–Gln-227, and Ala-249–Val-271. Residues Met-1–Lys-659 are Cytoplasmic-facing. Polar residues predominate over residues Pro-75–Val-87. The span at Glu-166–Arg-177 shows a compositional bias: basic and acidic residues. A compositionally biased stretch (polar residues) spans Ser-195–Asn-204. Residues Arg-206–Gln-218 are compositionally biased toward basic residues. The span at Ser-261 to Ser-270 shows a compositional bias: low complexity. ANK repeat units follow at residues Lys-301–Gly-330, Gln-377–Gly-406, and Pro-430–Arg-459. The chain crosses the membrane as a helical span at residues Ile-660–Leu-680. Residues Gly-681 to Glu-702 are Extracellular-facing. The chain crosses the membrane as a helical span at residues Thr-703 to Ile-723. At Glu-724–Asp-738 the chain is on the cytoplasmic side. Residues Val-739–Ala-759 form a helical membrane-spanning segment. The Extracellular portion of the chain corresponds to Tyr-760–Gln-789. The chain crosses the membrane as a helical span at residues Phe-790–Ile-810. Over Leu-811 to Arg-833 the chain is Cytoplasmic. The chain crosses the membrane as a helical span at residues Phe-834 to Val-854. Residues Pro-855–Ala-899 lie on the Extracellular side of the membrane. Residues Met-900–Ile-920 traverse the membrane as a helical segment. The Cytoplasmic portion of the chain corresponds to Thr-921–Ser-1172. The interval Val-1118 to Ser-1172 is disordered. Over residues Ala-1130–Ala-1144 the composition is skewed to low complexity.

The protein belongs to the transient receptor (TC 1.A.4) family. STrpC subfamily. TRPC2 sub-subfamily. As to expression, isoform 3 is ubiquitously expressed at low levels. Isoform 4 is expressed exclusively in vomeronasal organ.

The protein resides in the membrane. Functionally, thought to form a receptor-activated non-selective calcium permeant cation channel. Probably is operated by a phosphatidylinositol second messenger system activated by receptor tyrosine kinases or G-protein coupled receptors. May also be activated by intracellular calcium store depletion. Plays a role in mediating responsivity to pheromones that elicit aggressive and mating behaviors. Required for response to the Esp1 pheromone which enhances female sexual receptive behavior and to the Esp22 pheromone which inhibits adult male mating behavior. The sequence is that of Short transient receptor potential channel 2 (Trpc2) from Mus musculus (Mouse).